The sequence spans 593 residues: PiggyBac transposable element-derived protein 3 (593 aa).

Disordered regions lie at residues 27–53 (IQPP…INNL) and 69–105 (SDAE…SRRR). A compositionally biased stretch (acidic residues) spans 38 to 47 (SDEESGDEEG). A Phosphoserine modification is found at Ser86.

Expressed in heart and oocytes, but not in granulosa cells (at protein level).

The protein resides in the nucleus. Functionally, binds in vitro to PGBD3-related transposable elements, called MER85s; these non-autonomous 140 bp elements are characterized by the presence of PGBD3 terminal inverted repeats and the absence of internal transposase ORF. This chain is PiggyBac transposable element-derived protein 3 (PGBD3), found in Homo sapiens (Human).